We begin with the raw amino-acid sequence, 91 residues long: Transcription factor ILI7 (91 aa).

In terms of domain architecture, bHLH spans 4-58 (RSRSRASSAARITDEQIGDLVSKLQALLPEARLRSNDRVPSARVLQETCSYIRSL).

This sequence belongs to the bHLH protein family.

Functionally, atypical and probable non DNA-binding bHLH transcription factor that integrates multiple signaling pathways to regulate cell elongation and plant development. The polypeptide is Transcription factor ILI7 (ILI7) (Oryza sativa subsp. indica (Rice)).